A 194-amino-acid polypeptide reads, in one-letter code: Fe/S biogenesis protein NfuA (194 aa).

Cys151 and Cys154 together coordinate [4Fe-4S] cluster.

It belongs to the NfuA family. In terms of assembly, homodimer. [4Fe-4S] cluster is required as a cofactor.

Functionally, involved in iron-sulfur cluster biogenesis. Binds a 4Fe-4S cluster, can transfer this cluster to apoproteins, and thereby intervenes in the maturation of Fe/S proteins. Could also act as a scaffold/chaperone for damaged Fe/S proteins. The polypeptide is Fe/S biogenesis protein NfuA (Aliivibrio fischeri (strain ATCC 700601 / ES114) (Vibrio fischeri)).